A 621-amino-acid polypeptide reads, in one-letter code: C4-dicarboxylate transport sensor protein DctB (621 aa).

Residues 1–26 (MHHVRMVKLPAEASDPHALRSRARRS) are Cytoplasmic-facing. The helical transmembrane segment at 27 to 45 (WLVFAAVALVLLAAGLLLA) threads the bilayer. At 46–320 (RDYGRSQALA…PLAAGAREAQ (275 aa)) the chain is on the periplasmic side. Residues 321–338 (LLTLAALVPLLALAALLL) form a helical membrane-spanning segment. At 339–621 (RRRQVVAMRS…TTFAVNLKKA (283 aa)) the chain is on the cytoplasmic side. One can recognise a Histidine kinase domain in the interval 412–621 (GVAHEINQPV…TTFAVNLKKA (210 aa)). H415 is modified (phosphohistidine; by autocatalysis).

Autophosphorylated.

The protein localises to the cell inner membrane. It carries out the reaction ATP + protein L-histidine = ADP + protein N-phospho-L-histidine.. Member of the two-component regulatory system DctB/DctD involved in the transport of C4-dicarboxylates. DctB functions as a membrane-associated protein kinase that phosphorylates DctD in response to environmental signals. The sequence is that of C4-dicarboxylate transport sensor protein DctB (dctB) from Rhizobium meliloti (strain 1021) (Ensifer meliloti).